The chain runs to 400 residues: Formate-dependent phosphoribosylglycinamide formyltransferase (400 aa).

Residues 22 to 23 and Glu82 each bind N(1)-(5-phospho-beta-D-ribosyl)glycinamide; that span reads EL. Residues Arg115, Lys157, 162-167, 197-200, and Glu205 each bind ATP; these read SSGKGQ and EGFV. The region spanning 120–315 is the ATP-grasp domain; the sequence is RLAAETLGLP…EFELHARAIL (196 aa). Glu274 and Glu286 together coordinate Mg(2+). Residues Asp293, Lys362, and 369–370 contribute to the N(1)-(5-phospho-beta-D-ribosyl)glycinamide site; that span reads RR.

The protein belongs to the PurK/PurT family. In terms of assembly, homodimer.

The enzyme catalyses N(1)-(5-phospho-beta-D-ribosyl)glycinamide + formate + ATP = N(2)-formyl-N(1)-(5-phospho-beta-D-ribosyl)glycinamide + ADP + phosphate + H(+). Its pathway is purine metabolism; IMP biosynthesis via de novo pathway; N(2)-formyl-N(1)-(5-phospho-D-ribosyl)glycinamide from N(1)-(5-phospho-D-ribosyl)glycinamide (formate route): step 1/1. Functionally, involved in the de novo purine biosynthesis. Catalyzes the transfer of formate to 5-phospho-ribosyl-glycinamide (GAR), producing 5-phospho-ribosyl-N-formylglycinamide (FGAR). Formate is provided by PurU via hydrolysis of 10-formyl-tetrahydrofolate. The polypeptide is Formate-dependent phosphoribosylglycinamide formyltransferase (Mycolicibacterium vanbaalenii (strain DSM 7251 / JCM 13017 / BCRC 16820 / KCTC 9966 / NRRL B-24157 / PYR-1) (Mycobacterium vanbaalenii)).